The following is a 608-amino-acid chain: Kelch-like protein 10 (608 aa).

Positions C39 to P106 constitute a BTB domain. Kelch repeat units follow at residues I292–G339, Y340–N386, I388–G433, K434–E480, H481–D527, and L529–G574. At S501 the chain carries Phosphoserine.

Self-associates. Interacts with CUL3; indicative for the participation in an E3 ubiquitin ligase complex.

Its subcellular location is the cytoplasm. It functions in the pathway protein modification; protein ubiquitination. Its function is as follows. May be a substrate-specific adapter of a CUL3-based E3 ubiquitin-protein ligase complex which mediates the ubiquitination and subsequent proteasomal degradation of target proteins during spermatogenesis. This chain is Kelch-like protein 10 (Klhl10), found in Rattus norvegicus (Rat).